A 165-amino-acid polypeptide reads, in one-letter code: Protein SprT (165 aa).

One can recognise a SprT-like domain in the interval 22–163 (LAQANLKLDR…RCVHCGEPLV (142 aa)). His-78 is a Zn(2+) binding site. The active site involves Glu-79. His-82 lines the Zn(2+) pocket.

The protein belongs to the SprT family. Zn(2+) is required as a cofactor.

It is found in the cytoplasm. The protein is Protein SprT of Salmonella paratyphi C (strain RKS4594).